The chain runs to 346 residues: L-malyl-CoA/beta-methylmalyl-CoA lyase (346 aa).

Mg(2+) contacts are provided by E148 and D177. Substrate-binding positions include V176–D177 and L253–H254.

Belongs to the HpcH/HpaI aldolase family. Mg(2+) serves as cofactor. Mn(2+) is required as a cofactor.

It catalyses the reaction (S)-malyl-CoA = glyoxylate + acetyl-CoA. The enzyme catalyses (2R,3S)-beta-methylmalyl-CoA = propanoyl-CoA + glyoxylate. Involved in the methylaspartate cycle. Catalyzes the reversible cleavage of beta-methylmalyl-CoA to propionyl-CoA and glyoxylate, as well as the reversible cleavage of (S)-malyl-CoA to acetyl-CoA and glyoxylate. In addition, it has a small malyl-CoA thioesterase activity. It can also catalyze the cleavage of (S)-citramalyl-CoA to acetyl-CoA and pyruvate. The polypeptide is L-malyl-CoA/beta-methylmalyl-CoA lyase (citE1) (Haloarcula marismortui (strain ATCC 43049 / DSM 3752 / JCM 8966 / VKM B-1809) (Halobacterium marismortui)).